The primary structure comprises 202 residues: Large ribosomal subunit protein uL4 (202 aa).

Over residues 42–52 (GTKAQKSRSQV) the composition is skewed to polar residues. The disordered stretch occupies residues 42 to 70 (GTKAQKSRSQVSGTTKKSKKQKGGGARHG).

The protein belongs to the universal ribosomal protein uL4 family. In terms of assembly, part of the 50S ribosomal subunit.

One of the primary rRNA binding proteins, this protein initially binds near the 5'-end of the 23S rRNA. It is important during the early stages of 50S assembly. It makes multiple contacts with different domains of the 23S rRNA in the assembled 50S subunit and ribosome. Its function is as follows. Forms part of the polypeptide exit tunnel. This Xylella fastidiosa (strain Temecula1 / ATCC 700964) protein is Large ribosomal subunit protein uL4.